Here is a 152-residue protein sequence, read N- to C-terminus: Transcriptional regulator MraZ (152 aa).

2 SpoVT-AbrB domains span residues 5–52 and 81–124; these read ATLV…PLPE and ASEC…DEQT.

This sequence belongs to the MraZ family. In terms of assembly, forms oligomers.

Its subcellular location is the cytoplasm. It localises to the nucleoid. Its function is as follows. Negatively regulates its own expression and that of the subsequent genes in the proximal part of the division and cell wall (dcw) gene cluster. Acts by binding directly to DNA. May also regulate the expression of genes outside the dcw cluster. The polypeptide is Transcriptional regulator MraZ (Pectobacterium atrosepticum (strain SCRI 1043 / ATCC BAA-672) (Erwinia carotovora subsp. atroseptica)).